A 449-amino-acid polypeptide reads, in one-letter code: 5'-deoxyadenosine deaminase (449 aa).

Zn(2+) is bound by residues histidine 79 and histidine 81. The substrate site is built by glutamate 108 and histidine 200. Residue histidine 227 participates in Zn(2+) binding. Positions 230 and 316 each coordinate substrate. Aspartate 316 is a Zn(2+) binding site.

It belongs to the metallo-dependent hydrolases superfamily. MTA/SAH deaminase family. In terms of assembly, homotetramer. The cofactor is Zn(2+).

It catalyses the reaction 5'-deoxyadenosine + H2O + H(+) = 5'-deoxyinosine + NH4(+). It carries out the reaction S-adenosyl-L-homocysteine + H2O + H(+) = S-inosyl-L-homocysteine + NH4(+). The catalysed reaction is S-methyl-5'-thioadenosine + H2O + H(+) = S-methyl-5'-thioinosine + NH4(+). The enzyme catalyses adenosine + H2O + H(+) = inosine + NH4(+). It participates in amino-acid biosynthesis; S-adenosyl-L-methionine biosynthesis. In terms of biological role, catalyzes the deamination of three SAM-derived enzymatic products, namely 5'-deoxyadenosine, S-adenosyl-L-homocysteine, and 5'-methylthioadenosine, to produce the inosine analogs. Can also deaminate adenosine. The preferred substrate for this enzyme is 5'-deoxyadenosine, but all these substrates are efficiently deaminated. Likely functions in a S-adenosyl-L-methionine (SAM) recycling pathway from S-adenosyl-L-homocysteine (SAH) produced from SAM-dependent methylation reactions. May also be involved in the recycling of 5'-deoxyadenosine, whereupon the 5'-deoxyribose moiety of 5'-deoxyinosine is further metabolized to deoxyhexoses used for the biosynthesis of aromatic amino acids in methanogens. The polypeptide is 5'-deoxyadenosine deaminase (Methanospirillum hungatei JF-1 (strain ATCC 27890 / DSM 864 / NBRC 100397 / JF-1)).